A 418-amino-acid polypeptide reads, in one-letter code: Histidine--tRNA ligase (418 aa).

It belongs to the class-II aminoacyl-tRNA synthetase family.

It localises to the cytoplasm. It carries out the reaction tRNA(His) + L-histidine + ATP = L-histidyl-tRNA(His) + AMP + diphosphate + H(+). This is Histidine--tRNA ligase from Methanococcus maripaludis (strain C7 / ATCC BAA-1331).